Reading from the N-terminus, the 252-residue chain is Phosphoglycolate phosphatase (252 aa).

Catalysis depends on aspartate 13, which acts as the Nucleophile. Residues aspartate 13, aspartate 15, and aspartate 192 each coordinate Mg(2+).

The protein belongs to the HAD-like hydrolase superfamily. CbbY/CbbZ/Gph/YieH family. In terms of assembly, monomer. Mg(2+) is required as a cofactor. It depends on chloride as a cofactor.

The catalysed reaction is 2-phosphoglycolate + H2O = glycolate + phosphate. It functions in the pathway organic acid metabolism; glycolate biosynthesis; glycolate from 2-phosphoglycolate: step 1/1. Specifically catalyzes the dephosphorylation of 2-phosphoglycolate. Is involved in the dissimilation of the intracellular 2-phosphoglycolate formed during the DNA repair of 3'-phosphoglycolate ends, a major class of DNA lesions induced by oxidative stress. The protein is Phosphoglycolate phosphatase of Salmonella typhi.